The primary structure comprises 1001 residues: Ulvan lyase, long isoform (1001 aa).

The N-terminal stretch at 1–21 (MNGLKMLLFSTTLLTAFTLHA) is a signal peptide. 126-127 (SH) lines the substrate pocket. Catalysis depends on histidine 127, which acts as the Proton donor/acceptor. Ca(2+) contacts are provided by aspartate 189, aspartate 199, and lysine 201. Residues tyrosine 280 and arginine 297 each contribute to the substrate site. The Ca(2+) site is built by aspartate 300, aspartate 303, and tyrosine 305. A substrate-binding site is contributed by tyrosine 361.

The protein belongs to the polysaccharide lyase 24 family.

Ulvan lyase involved in ulvan degradation. Ulvan is the main polysaccharide component of the Ulvales (green seaweed) cell wall. It is composed of disaccharide building blocks comprising 3-sulfated rhamnose (Rha3S) linked to D-glucuronic acid (GlcA), L-iduronic acid (IduA), or D-xylose (Xyl). Ulvan lyase catalyzes preferentially the endolytic cleavage of the glycosidic bond between Rha3S and the uronic acid GlcA, but not IduA, producing oligosaccharides that have unsaturated 4-deoxy-L-threo-hex-4-enopyranosiduronic acid (deltaUA) at the non-reducing end. The most abundant end products in the degradation of the ulvan polysaccharide were deltaUA-Rha3S disaccharides and deltaUA-Rha3S-IduA-Rha3S and deltaUA-Rha3S-Xyl-Rha3S tetrasaccharides. The polypeptide is Ulvan lyase, long isoform (Pseudoalteromonas sp. (strain PLSV)).